The chain runs to 166 residues: Large ribosomal subunit protein uL10 (166 aa).

It belongs to the universal ribosomal protein uL10 family. Part of the ribosomal stalk of the 50S ribosomal subunit. The N-terminus interacts with L11 and the large rRNA to form the base of the stalk. The C-terminus forms an elongated spine to which L12 dimers bind in a sequential fashion forming a multimeric L10(L12)X complex.

Functionally, forms part of the ribosomal stalk, playing a central role in the interaction of the ribosome with GTP-bound translation factors. The sequence is that of Large ribosomal subunit protein uL10 from Staphylococcus epidermidis (strain ATCC 35984 / DSM 28319 / BCRC 17069 / CCUG 31568 / BM 3577 / RP62A).